A 671-amino-acid chain; its full sequence is Spartin (671 aa).

The residue at position 1 (Met1) is an N-acetylmethionine. Residues 16-94 (IKEAYEKAFM…LQNVRTRLEI (79 aa)) enclose the MIT domain. The segment at 110–175 (VPKLYPEFPP…CPAEAPPAYS (66 aa)) is disordered. A compositionally biased stretch (basic and acidic residues) spans 118 to 128 (PPKDACKKSPE). At Ser126 the chain carries Phosphoserine. Low complexity predominate over residues 143 to 158 (GSASAACAGPSGAPSA). Residues 159-174 (LPVPSPSCPAEAPPAY) are compositionally biased toward pro residues. The tract at residues 190–385 (DSGEFSSVGE…SIDQGSKDAR (196 aa)) is ubiquitin-binding region (UBR) domain. The LC3-interacting region (LIR); mediates interaction with MAP1LC3A AND MAP1LC3C motif lies at 193 to 200 (EFSSVGED). The tract at residues 346 to 421 (FQIPGRSSHP…SSEEKSKELP (76 aa)) is disordered. Lys360 is covalently cross-linked (Glycyl lysine isopeptide (Lys-Gly) (interchain with G-Cter in ubiquitin)). The segment covering 369–379 (QSSSSGSSIDQ) has biased composition (low complexity). Residues 384–393 (ARHKGKRGKK) are compositionally biased toward basic residues. The Senescence domain maps to 431–615 (ILSGASWVSW…YNIDNIGIKA (185 aa)). The segment at 435-507 (ASWVSWGLVK…LVDGVCTVAN (73 aa)) is required for localization to lipid droplets. Ser474 bears the Phosphoserine mark. The segment at 635 to 671 (VERPQRESQGGATSTEGRRDIGKQVEEEKPGAGKKDK) is disordered. Residues 650 to 671 (EGRRDIGKQVEEEKPGAGKKDK) show a composition bias toward basic and acidic residues.

In terms of assembly, interacts with ITCH and WWP1. Interacts (via MIT domain) with IST1; leading to the recruitment of SPART to midbodies. Interacts with MAP1LC3A and MAP1LC3C. In terms of processing, ubiquitinated; ubiquitination does not require ITCH and WWP1. As to expression, brain (at protein level).

It localises to the cytoplasm. Its subcellular location is the midbody. The protein localises to the lipid droplet. Lipophagy receptor that plays an important role in lipid droplet (LD) turnover in motor neurons. Localizes to LDs and interacts with components of the autophagy machinery, such as MAP1LC3A/C proteins to deliver LDs to autophagosomes for degradation via lipophagy. Lipid transfer protein required for lipid droplet degradation, including by lipophagy. Can bind and transfer all lipid species found in lipid droplets, from phospholipids to triglycerides and sterol esters but the direction of lipid transfer by spartin and its cargos are unknown. May be implicated in endosomal trafficking, or microtubule dynamics, or both. Participates in cytokinesis. In Mus musculus (Mouse), this protein is Spartin.